Reading from the N-terminus, the 617-residue chain is MPALSRWASLPGPSMREAAFMYSTAVAIFLVILVAALQGSAPRESPLPYHIPLDPEGSLELSWNVSYTQEAIHFQLLVRRLKAGVLFGMSDRGELENADLVVLWTDGDTAYFADAWSDQKGQIHLDPQQDYQLLQVQRTPEGLTLLFKRPFGTCDPKDYLIEDGTVHLVYGILEEPFRSLEAINGSGLQMGLQRVQLLKPNIPEPELPSDACTMEVQAPNIQIPSQETTYWCYIKELPKGFSRHHIIKYEPIVTKGNEALVHHMEVFQCAPEMDSVPHFSGPCDSKMKPDRLNYCRHVLAAWALGAKAFYYPEEAGLAFGGPGSSRYLRLEVHYHNPLVIEGRNDSSGIRLYYTAKLRRFNAGIMELGLVYTPVMAIPPRETAFILTGYCTDKCTQLALPPSGIHIFASQLHTHLTGRKVVTVLVRDGREWEIVNQDNHYSPHFQEIRMLKKVVSVHPGDVLITSCTYNTEDRELATVGGFGILEEMCVNYVHYYPQTQLELCKSAVDAGFLQKYFHLINRFNNEDVCTCPQASVSQQFTSVPWNSFNRDVLKALYSFAPISMHCNKSSAVRFQGEWNLQPLPKVISTLEEPTPQCPTSQGRSPAGPTVVSIGGGKG.

The Cytoplasmic portion of the chain corresponds to 1–16; it reads MPALSRWASLPGPSMR. The helical; Signal-anchor for type II membrane protein transmembrane segment at 17–37 threads the bilayer; the sequence is EAAFMYSTAVAIFLVILVAAL. Over 38 to 617 the chain is Intragranular; the sequence is QGSAPRESPL…TVVSIGGGKG (580 aa). The DOMON domain occupies 57–173; the sequence is GSLELSWNVS…GTVHLVYGIL (117 aa). The N-linked (GlcNAc...) asparagine glycan is linked to N64. Intrachain disulfides connect C154-C596, C232-C283, C269-C295, C390-C503, C394-C565, and C466-C488. N184 is a glycosylation site (N-linked (GlcNAc...) (complex) asparagine). Residue Y230 is part of the active site. H262 and H263 together coordinate Cu(2+). H333 provides a ligand contact to Cu(2+). N-linked (GlcNAc...) asparagine glycosylation is present at N344. H412 is a catalytic residue. 3 residues coordinate Cu(2+): H412, H414, and M487. Residue N566 is glycosylated (N-linked (GlcNAc...) asparagine). A disordered region spans residues 590-617; sequence EEPTPQCPTSQGRSPAGPTVVSIGGGKG.

Belongs to the copper type II ascorbate-dependent monooxygenase family. In terms of assembly, homotetramer; composed of two disulfide-linked dimers. It depends on Cu(2+) as a cofactor. N-glycosylated. In terms of processing, proteolytic cleavage after the membrane-anchor leads to the release of the soluble form.

It localises to the cytoplasmic vesicle. Its subcellular location is the secretory vesicle lumen. The protein localises to the secretory vesicle. It is found in the chromaffin granule lumen. The protein resides in the secreted. It localises to the secretory vesicle membrane. Its subcellular location is the chromaffin granule membrane. The enzyme catalyses dopamine + 2 L-ascorbate + O2 = (R)-noradrenaline + 2 monodehydro-L-ascorbate radical + H2O. It participates in catecholamine biosynthesis; (R)-noradrenaline biosynthesis; (R)-noradrenaline from dopamine: step 1/1. Functionally, catalyzes the hydroxylation of dopamine to noradrenaline (also known as norepinephrine), and is thus vital for regulation of these neurotransmitters. The chain is Dopamine beta-hydroxylase (DBH) from Homo sapiens (Human).